A 271-amino-acid chain; its full sequence is Cyclic AMP-dependent transcription factor ATF-1 (271 aa).

The disordered stretch occupies residues 1-61; the sequence is MEDSHKSTTS…QKAHGILARR (61 aa). The KID domain occupies 31–90; it reads QVSSLSESEESQDSSDSIGSSQKAHGILARRPSYRKILKDLSSEDTRGRKGDGENSGVSA. Phosphoserine; by CaMK1, CDK3, RPS6KA4 and RPS6KA5 is present on Ser63. Residue Ser198 is modified to Phosphoserine; by HIPK2. Residues Lys208 and Lys215 each participate in a glycyl lysine isopeptide (Lys-Gly) (interchain with G-Cter in SUMO2) cross-link. The bZIP domain occupies 213–271; that stretch reads QLKREIRLMKNREAARECRRKKKEYVKCLENRVAVLENQNKTLIEELKTLKDLYSNKSV. A basic motif region spans residues 215–239; the sequence is KREIRLMKNREAARECRRKKKEYVK. The interval 241–262 is leucine-zipper; that stretch reads LENRVAVLENQNKTLIEELKTL.

This sequence belongs to the bZIP family. ATF subfamily. Binds DNA as a dimer. Interacts with HIPK2 and CDK3. Interacts with MOTS-c, a peptide produced by the mitochondrially encoded 12S rRNA MT-RNR1; the interaction occurs in the nucleus following metabolic stress. In terms of processing, phosphorylated at Ser-198 by HIPK2 in response to genotoxic stress. This phosphorylation promotes transcription repression of FTH1 and other antioxidant detoxification genes. The CDK3-mediated phosphorylation at Ser-63 promotes its transactivation and transcriptional activities. Phosphorylated at Ser-63 by RPS6KA4 and RPS6KA5 in response to mitogenic or stress stimuli.

It is found in the nucleus. Its function is as follows. This protein binds the cAMP response element (CRE) (consensus: 5'-GTGACGT[AC][AG]-3'), a sequence present in many viral and cellular promoters. Binds to the Tax-responsive element (TRE) of HTLV-I. Mediates PKA-induced stimulation of CRE-reporter genes. Represses the expression of FTH1 and other antioxidant detoxification genes. Triggers cell proliferation and transformation. The protein is Cyclic AMP-dependent transcription factor ATF-1 (ATF1) of Homo sapiens (Human).